Consider the following 369-residue polypeptide: tRNA(Met) cytidine acetate ligase (369 aa).

ATP contacts are provided by residues 7–20 (VAEF…HKYL), glycine 96, asparagine 152, and arginine 175.

The protein belongs to the TmcAL family.

Its subcellular location is the cytoplasm. The enzyme catalyses cytidine(34) in elongator tRNA(Met) + acetate + ATP = N(4)-acetylcytidine(34) in elongator tRNA(Met) + AMP + diphosphate. Its function is as follows. Catalyzes the formation of N(4)-acetylcytidine (ac(4)C) at the wobble position of elongator tRNA(Met), using acetate and ATP as substrates. First activates an acetate ion to form acetyladenylate (Ac-AMP) and then transfers the acetyl group to tRNA to form ac(4)C34. The sequence is that of tRNA(Met) cytidine acetate ligase from Streptococcus agalactiae serotype III (strain NEM316).